A 426-amino-acid chain; its full sequence is Glutamyl-tRNA reductase (426 aa).

Substrate-binding positions include 52 to 55 (TCNR), Ser110, 115 to 117 (EYE), and Gln121. Cys53 (nucleophile) is an active-site residue. Position 190–195 (190–195 (GAGEMG)) interacts with NADP(+).

Belongs to the glutamyl-tRNA reductase family. In terms of assembly, homodimer.

It carries out the reaction (S)-4-amino-5-oxopentanoate + tRNA(Glu) + NADP(+) = L-glutamyl-tRNA(Glu) + NADPH + H(+). It functions in the pathway porphyrin-containing compound metabolism; protoporphyrin-IX biosynthesis; 5-aminolevulinate from L-glutamyl-tRNA(Glu): step 1/2. Its function is as follows. Catalyzes the NADPH-dependent reduction of glutamyl-tRNA(Glu) to glutamate 1-semialdehyde (GSA). The polypeptide is Glutamyl-tRNA reductase (Saccharolobus islandicus (strain Y.N.15.51 / Yellowstone #2) (Sulfolobus islandicus)).